The primary structure comprises 309 residues: Ribosomal RNA large subunit methyltransferase F (309 aa).

Residues 1 to 21 form a disordered region; it reads MASQHDKKSVQSGLLHPRNPH.

Belongs to the methyltransferase superfamily. METTL16/RlmF family.

Its subcellular location is the cytoplasm. It catalyses the reaction adenosine(1618) in 23S rRNA + S-adenosyl-L-methionine = N(6)-methyladenosine(1618) in 23S rRNA + S-adenosyl-L-homocysteine + H(+). Its function is as follows. Specifically methylates the adenine in position 1618 of 23S rRNA. This is Ribosomal RNA large subunit methyltransferase F from Desulfotalea psychrophila (strain LSv54 / DSM 12343).